The chain runs to 153 residues: Replicase large subunit (153 aa).

This sequence belongs to the tobamovirus RNA-directed RNA polymerase family.

It catalyses the reaction RNA(n) + a ribonucleoside 5'-triphosphate = RNA(n+1) + diphosphate. The replicase large subunit is an RNA-dependent RNA polymerase active in viral RNA replication. The protein is Replicase large subunit of Citrullus (Cucumber).